A 223-amino-acid polypeptide reads, in one-letter code: Deoxyribose-phosphate aldolase 2 (223 aa).

D89 acts as the Proton donor/acceptor in catalysis. Residue K152 is the Schiff-base intermediate with acetaldehyde of the active site. K181 serves as the catalytic Proton donor/acceptor.

It belongs to the DeoC/FbaB aldolase family. DeoC type 1 subfamily.

Its subcellular location is the cytoplasm. It catalyses the reaction 2-deoxy-D-ribose 5-phosphate = D-glyceraldehyde 3-phosphate + acetaldehyde. Its pathway is carbohydrate degradation; 2-deoxy-D-ribose 1-phosphate degradation; D-glyceraldehyde 3-phosphate and acetaldehyde from 2-deoxy-alpha-D-ribose 1-phosphate: step 2/2. Functionally, catalyzes a reversible aldol reaction between acetaldehyde and D-glyceraldehyde 3-phosphate to generate 2-deoxy-D-ribose 5-phosphate. This is Deoxyribose-phosphate aldolase 2 from Bacillus licheniformis (strain ATCC 14580 / DSM 13 / JCM 2505 / CCUG 7422 / NBRC 12200 / NCIMB 9375 / NCTC 10341 / NRRL NRS-1264 / Gibson 46).